Reading from the N-terminus, the 883-residue chain is DNA mismatch repair protein MutS (883 aa).

633 to 640 (GPNMGGKS) is a binding site for ATP.

The protein belongs to the DNA mismatch repair MutS family.

In terms of biological role, this protein is involved in the repair of mismatches in DNA. It is possible that it carries out the mismatch recognition step. This protein has a weak ATPase activity. This is DNA mismatch repair protein MutS from Bordetella parapertussis (strain 12822 / ATCC BAA-587 / NCTC 13253).